A 324-amino-acid chain; its full sequence is MKFGLFFLNFMNSKRSSDQVIEEMLDTAHYVDQLKFDTLAVYENHFSNNGVVGAPLTVAGFLLGMTKNAKVASLNHVITTHHPVRVAEEACLLDQMSEGRFAFGFSDCEKSADMRFFNRPTDSQFQLFSECHKIINDAFTTGYCHPNNDFYSFPKISVNPHAFTEGGPAQFVNATSKEVVEWAAKLGLPLVFRWDDSNAQRKEYAGLYHEVAQAHGVDVSQVRHKLTLLVNQNVDGEAARAEARVYLEEFVRESYSNTDFEQKMGELLSENAIGTYEESTQAARVAIECCGAADLLMSFESMEDKAQQRAVIDVVNANIVKYHS.

It belongs to the bacterial luciferase oxidoreductase family. In terms of assembly, heterodimer of an alpha and a beta chain.

The catalysed reaction is a long-chain fatty aldehyde + FMNH2 + O2 = a long-chain fatty acid + hnu + FMN + H2O + 2 H(+). Its function is as follows. Light-emitting reaction in luminous bacteria. The specific role of the beta subunit is unknown, but it is absolutely required for bioluminescence activity. The sequence is that of Alkanal monooxygenase beta chain (luxB) from Vibrio harveyi (Beneckea harveyi).